Consider the following 192-residue polypeptide: Adenylate kinase (192 aa).

Glycine 10–threonine 18 is a binding site for ATP.

Belongs to the archaeal adenylate kinase family. Monomer.

The protein localises to the cytoplasm. It catalyses the reaction AMP + ATP = 2 ADP. This chain is Adenylate kinase (adkA), found in Methanocaldococcus jannaschii (strain ATCC 43067 / DSM 2661 / JAL-1 / JCM 10045 / NBRC 100440) (Methanococcus jannaschii).